A 60-amino-acid polypeptide reads, in one-letter code: Protein P7 (60 aa).

A helical transmembrane segment spans residues 28–48 (FIGVTLIGMFISYYLYALISI).

The protein resides in the host membrane. This Vitis vinifera (Grape) protein is Protein P7.